The chain runs to 57 residues: MAVPKRRMSRSNTRSRRSQWKAQAPDLVGVTVGGATHRVPRRLVKAVKLGLVDPAGK.

The segment covering 1-19 has biased composition (basic residues); the sequence is MAVPKRRMSRSNTRSRRSQ. The disordered stretch occupies residues 1–22; sequence MAVPKRRMSRSNTRSRRSQWKA.

It belongs to the bacterial ribosomal protein bL32 family.

The chain is Large ribosomal subunit protein bL32 from Rhodococcus jostii (strain RHA1).